A 94-amino-acid chain; its full sequence is Selenoprotein K (94 aa).

Residues 20–42 form a helical membrane-spanning segment; the sequence is LSFITDFFWGIAEFVVFFFKTLL. A disordered region spans residues 48 to 94; that stretch reads KRRGYGGSSDSRYDDGRGPPGNPPRRMGRISHLRGPSPPPMAGGUGR. Position 92 (selenocysteine 92) is a non-standard amino acid, selenocysteine.

Belongs to the selenoprotein K family. Interacts with DERL1, DERL2, DERL3 and SELENOS. The SELENOK-SELENOS complex interacts with VCP. Interacts with ZDHHC6. Post-translationally, cleaved by CAPN2/m-calpain in resting macrophages but not in activated macrophages. Macrophage activation up-regulates expression of the calpain inhibitor CAST/calpastatin, resulting in inhibition of CAPN2 activity. Truncated SELENOK proteins produced by failed UGA/Sec decoding are ubiquitinated by the CRL2(KLHDC2) complex, which recognizes the diglycine (Gly-Gly) at the C-terminus of truncated SELENOK proteins.

The protein resides in the endoplasmic reticulum membrane. It localises to the cell membrane. Required for Ca(2+) flux in immune cells and plays a role in T-cell proliferation and in T-cell and neutrophil migration. Involved in endoplasmic reticulum-associated degradation (ERAD) of soluble glycosylated proteins. Required for palmitoylation and cell surface expression of CD36 and involved in macrophage uptake of low-density lipoprotein and in foam cell formation. Together with ZDHHC6, required for palmitoylation of ITPR1 in immune cells, leading to regulate ITPR1 stability and function. Plays a role in protection of cells from ER stress-induced apoptosis. Protects cells from oxidative stress when overexpressed in cardiomyocytes. This chain is Selenoprotein K, found in Rattus norvegicus (Rat).